We begin with the raw amino-acid sequence, 148 residues long: Basic leucine zipper 4 (148 aa).

One can recognise a bZIP domain in the interval 48-97 (DDKKRRRTISNRESAKRSRMKKKKRFEELTEEVNRLNIRNQELKNRLANV). The disordered stretch occupies residues 50–70 (KKRRRTISNRESAKRSRMKKK). The tract at residues 50–72 (KKRRRTISNRESAKRSRMKKKKR) is basic motif. The interval 76 to 90 (LTEEVNRLNIRNQEL) is leucine-zipper.

Its subcellular location is the nucleus. Its function is as follows. Probable transcription factor involved in somatic embryogenesis. Acts as a positive regulator of BHLH109. The polypeptide is Basic leucine zipper 4 (Arabidopsis thaliana (Mouse-ear cress)).